The sequence spans 172 residues: Small ribosomal subunit protein uS5 (172 aa).

One can recognise an S5 DRBM domain in the interval L17 to V80.

The protein belongs to the universal ribosomal protein uS5 family. Part of the 30S ribosomal subunit. Contacts proteins S4 and S8.

In terms of biological role, with S4 and S12 plays an important role in translational accuracy. Functionally, located at the back of the 30S subunit body where it stabilizes the conformation of the head with respect to the body. The chain is Small ribosomal subunit protein uS5 from Burkholderia lata (strain ATCC 17760 / DSM 23089 / LMG 22485 / NCIMB 9086 / R18194 / 383).